A 228-amino-acid polypeptide reads, in one-letter code: NAD(P)H-hydrate epimerase (228 aa).

One can recognise a YjeF N-terminal domain in the interval 9 to 209 (VRAVERLAHR…LLGLTPAFLA (201 aa)). Residue 53–57 (NNGGD) coordinates (6S)-NADPHX. K(+)-binding residues include asparagine 54 and aspartate 115. (6S)-NADPHX contacts are provided by residues 119–125 (GIGLARP) and aspartate 148. K(+) is bound at residue serine 151.

Belongs to the NnrE/AIBP family. It depends on K(+) as a cofactor.

The catalysed reaction is (6R)-NADHX = (6S)-NADHX. It carries out the reaction (6R)-NADPHX = (6S)-NADPHX. Catalyzes the epimerization of the S- and R-forms of NAD(P)HX, a damaged form of NAD(P)H that is a result of enzymatic or heat-dependent hydration. This is a prerequisite for the S-specific NAD(P)H-hydrate dehydratase to allow the repair of both epimers of NAD(P)HX. This Bordetella parapertussis (strain 12822 / ATCC BAA-587 / NCTC 13253) protein is NAD(P)H-hydrate epimerase.